The chain runs to 470 residues: Cannabinoid receptor 1 (470 aa).

Topologically, residues 1–121 (MKSILDGLAD…TPSQQLVIAA (121 aa)) are extracellular. Positions 2–23 (KSILDGLADTTFRTITTDLLYL) are required for mitochondrial localization. N-linked (GlcNAc...) asparagine glycosylation is found at Asn78 and Asn84. Residues 122 to 142 (LSIILGTFTVLENMLVLVVIV) form a helical membrane-spanning segment. The Cytoplasmic segment spans residues 143 to 154 (QSRSLRCRPSYH). Residues 155–175 (FIGSLAVADLLGSVIFVYSFV) traverse the membrane as a helical segment. Over 176 to 187 (DFHVFHRKDSPN) the chain is Extracellular. Residues 188 to 208 (VFLFKLGGVTASFTASVGSLF) traverse the membrane as a helical segment. Residues 209–232 (LTAIDRYISIHRPMSYKRIVTRTK) are Cytoplasmic-facing. Residues 233-253 (AVIAFCMMWTIAIVIAVLPLF) form a helical membrane-spanning segment. Residues 254-277 (GWNCIKLRSVCSDIFPLIDETYLM) are Extracellular-facing. A helical transmembrane segment spans residues 278-298 (FWIGVTSVLLLFIVYAYMYIL). At 299 to 344 (WKAHNHAVRMLQRGTQKSIIVHTSEDGKVHITRPDQTRMDIRLAKT) the chain is on the cytoplasmic side. A helical membrane pass occupies residues 345-365 (LVLILVVLIICWGPLMAIMVY). Residues 366–377 (DVFGKINKTIKT) are Extracellular-facing. Asn372 carries an N-linked (GlcNAc...) asparagine glycan. Residues 378 to 398 (VFAFCSVLCLLNSTVNPIIYA) traverse the membrane as a helical segment. The Cytoplasmic segment spans residues 399–470 (LRSKDLRNAF…VSTDTSAEAV (72 aa)). The S-palmitoyl cysteine moiety is linked to residue Cys415.

This sequence belongs to the G-protein coupled receptor 1 family. Post-translationally, palmitoylation at Cys-415 is important for recruitment at both plasma membrane and lipid rafts and association with G protein alpha subunits. In terms of tissue distribution, expressed in neurons, especially in the olfactory bulbs, telencephalic pallium, and hypothalamus and also in the midbrain and hindbrain (in the mesencephalic tegmentum and dorsolateral rhombencephalon). Expressed also in the spinal cord.

The protein resides in the cell membrane. The protein localises to the mitochondrion outer membrane. It is found in the cell projection. It localises to the axon. Its subcellular location is the presynapse. Functionally, G-protein coupled receptor for cannabinoids. Mediates many cannabinoid-induced effects in the central nervous system (CNS), as well as in peripheral tissues. Regulates cellular respiration and energy production in response to cannabinoids. Signaling typically involves reduction in cyclic AMP. The protein is Cannabinoid receptor 1 (cnr1) of Xenopus laevis (African clawed frog).